Here is a 147-residue protein sequence, read N- to C-terminus: 3-dehydroquinate dehydratase (147 aa).

Tyrosine 23 acts as the Proton acceptor in catalysis. Positions 75, 81, and 88 each coordinate substrate. Histidine 101 acts as the Proton donor in catalysis. Substrate is bound by residues 102 to 103 (LS) and arginine 112.

This sequence belongs to the type-II 3-dehydroquinase family. As to quaternary structure, homododecamer.

The catalysed reaction is 3-dehydroquinate = 3-dehydroshikimate + H2O. It functions in the pathway metabolic intermediate biosynthesis; chorismate biosynthesis; chorismate from D-erythrose 4-phosphate and phosphoenolpyruvate: step 3/7. Catalyzes a trans-dehydration via an enolate intermediate. This Thioalkalivibrio sulfidiphilus (strain HL-EbGR7) protein is 3-dehydroquinate dehydratase.